The following is a 617-amino-acid chain: Probable Xaa-Pro aminopeptidase P (617 aa).

Aspartate 414, aspartate 425, glutamate 523, and glutamate 537 together coordinate Mn(2+).

It belongs to the peptidase M24B family. Requires Mn(2+) as cofactor.

The enzyme catalyses Release of any N-terminal amino acid, including proline, that is linked to proline, even from a dipeptide or tripeptide.. Its function is as follows. Catalyzes the removal of a penultimate prolyl residue from the N-termini of peptides. The sequence is that of Probable Xaa-Pro aminopeptidase P (AMPP) from Colletotrichum graminicola (strain M1.001 / M2 / FGSC 10212) (Maize anthracnose fungus).